Here is a 618-residue protein sequence, read N- to C-terminus: F-box/LRR-repeat protein At3g58940 (618 aa).

The F-box domain occupies 1–47; sequence MDRVSNLPEEVRCHILSFLPTKHAALTSVLSKSWLNLWKFETNLDID. 6 LRR repeats span residues 147–176, 196–223, 224–249, 282–313, 314–339, and 354–379; these read LKLRSEHCVNWWHWDIGASLPNLKSLNIDS, EVHMANMEWRELDETMSSASLTKLSIHG, TGVEEFEHPKSISIDTPNLLYLNYSD, TLYLTEDTLEVLTMCCESMPVFNNLKTLGLKS, DEGRGWQAVPALLRNCPHLEFLIIEG, and CISREDKGRSLISCPVKKLEVRGFRG. Positions 587–618 are disordered; sequence ATDSERAETSSNQEMTELGQATATYFPPREGE. The span at 595 to 609 shows a compositional bias: polar residues; the sequence is TSSNQEMTELGQATA.

In Arabidopsis thaliana (Mouse-ear cress), this protein is F-box/LRR-repeat protein At3g58940.